We begin with the raw amino-acid sequence, 215 residues long: Probable phosphoglycerate mutase GpmB (215 aa).

Substrate is bound by residues 8–15, 21–22, R58, R60, 82–85, 104–105, and 151–152; these read RHGETQWN, QG, ELNM, RR, and GI. The active-site Tele-phosphohistidine intermediate is H9. Residue E82 is the Proton donor/acceptor of the active site.

The protein belongs to the phosphoglycerate mutase family. GpmB subfamily.

The catalysed reaction is (2R)-2-phosphoglycerate = (2R)-3-phosphoglycerate. The protein operates within carbohydrate degradation; glycolysis; pyruvate from D-glyceraldehyde 3-phosphate: step 3/5. The chain is Probable phosphoglycerate mutase GpmB from Escherichia fergusonii (strain ATCC 35469 / DSM 13698 / CCUG 18766 / IAM 14443 / JCM 21226 / LMG 7866 / NBRC 102419 / NCTC 12128 / CDC 0568-73).